Consider the following 142-residue polypeptide: MAKKVEAYIKLQVAAGMANPSPPVGPALGQRGVNIMEFCKAFNAKTESMEKGLPVPVVITVYSDRSFTFVTKTSPAAVLLKKAAGIKSGSGRPNTEKVGTVTDAQIQEIAEAKAADMTGADIEAMKRSIAGTARSMGLVVEG.

This sequence belongs to the universal ribosomal protein uL11 family. Part of the ribosomal stalk of the 50S ribosomal subunit. Interacts with L10 and the large rRNA to form the base of the stalk. L10 forms an elongated spine to which L12 dimers bind in a sequential fashion forming a multimeric L10(L12)X complex. Post-translationally, one or more lysine residues are methylated.

Forms part of the ribosomal stalk which helps the ribosome interact with GTP-bound translation factors. The sequence is that of Large ribosomal subunit protein uL11 from Vibrio vulnificus (strain CMCP6).